The primary structure comprises 155 residues: Ribosomal RNA large subunit methyltransferase H (155 aa).

Residues Leu72, Gly103, and 122–127 (LSPLTL) contribute to the S-adenosyl-L-methionine site.

It belongs to the RNA methyltransferase RlmH family. Homodimer.

The protein localises to the cytoplasm. The enzyme catalyses pseudouridine(1915) in 23S rRNA + S-adenosyl-L-methionine = N(3)-methylpseudouridine(1915) in 23S rRNA + S-adenosyl-L-homocysteine + H(+). Functionally, specifically methylates the pseudouridine at position 1915 (m3Psi1915) in 23S rRNA. The polypeptide is Ribosomal RNA large subunit methyltransferase H (Mannheimia succiniciproducens (strain KCTC 0769BP / MBEL55E)).